We begin with the raw amino-acid sequence, 223 residues long: Transmembrane protein 126 (223 aa).

Over 1-39 the chain is Mitochondrial matrix; the sequence is MALSRAKPDELPRDAVVITEDQALKYQWKIITSWDKIGE. Residues 40–62 form a helical membrane-spanning segment; it reads VWSLRYTPGILSALAAGTGAYIN. Residues 63–78 are Mitochondrial intermembrane-facing; it reads NHYRTKLRLGGHGRLS. Residues 79–99 form a helical membrane-spanning segment; that stretch reads TYLPIVAVPAIFTMLAHKFFI. Residues 100–123 lie on the Mitochondrial matrix side of the membrane; sequence QRPILLNPLGECPVCIQMRSAAFQ. A helical transmembrane segment spans residues 124–144; sequence TSLGIVYPTILAPFAAFLFAT. Residues 145–171 lie on the Mitochondrial intermembrane side of the membrane; that stretch reads RCYTYRIPSITENPREVFLLWRKFTRP. The chain crosses the membrane as a helical span at residues 172–192; that stretch reads IVPALGTLIGLQALLTMFLTG. Topologically, residues 193–223 are mitochondrial matrix; the sequence is QEDKQNFKLMLRMREIEHQVEEEHLPQRMDF.

The protein belongs to the TMEM126 family. In terms of assembly, associates with mitochondrial complex I assembly intermediates during its biogenesis.

Its subcellular location is the mitochondrion membrane. Functionally, as part of the MCIA complex, involved in the assembly of the mitochondrial complex I. This is Transmembrane protein 126 from Drosophila melanogaster (Fruit fly).